Here is a 334-residue protein sequence, read N- to C-terminus: Beta-ketoacyl-[acyl-carrier-protein] synthase III (334 aa).

Catalysis depends on residues Cys-114 and His-260. An ACP-binding region spans residues 261–265; it reads QANLR. The active site involves Asn-290.

It belongs to the thiolase-like superfamily. FabH family. Homodimer.

The protein resides in the cytoplasm. It catalyses the reaction malonyl-[ACP] + acetyl-CoA + H(+) = 3-oxobutanoyl-[ACP] + CO2 + CoA. It participates in lipid metabolism; fatty acid biosynthesis. Catalyzes the condensation reaction of fatty acid synthesis by the addition to an acyl acceptor of two carbons from malonyl-ACP. Catalyzes the first condensation reaction which initiates fatty acid synthesis and may therefore play a role in governing the total rate of fatty acid production. Possesses both acetoacetyl-ACP synthase and acetyl transacylase activities. Its substrate specificity determines the biosynthesis of branched-chain and/or straight-chain of fatty acids. The chain is Beta-ketoacyl-[acyl-carrier-protein] synthase III from Clostridium tetani (strain Massachusetts / E88).